Reading from the N-terminus, the 550-residue chain is Carboxypeptidase Y homolog A (550 aa).

Residues 1–18 form the signal peptide; it reads MKSLVLGLLVGSAIASGP. Positions 19–131 are excised as a propeptide; it reads LQHVLHAPPE…KLAQYDLRIR (113 aa). Disulfide bonds link cysteine 185–cysteine 424, cysteine 319–cysteine 333, cysteine 343–cysteine 366, cysteine 350–cysteine 359, and cysteine 388–cysteine 394. Asparagine 216 is a glycosylation site (N-linked (GlcNAc...) asparagine). Serine 272 is a catalytic residue. Aspartate 463 is an active-site residue. N-linked (GlcNAc...) asparagine glycans are attached at residues asparagine 493 and asparagine 514. Residue histidine 525 is part of the active site.

It belongs to the peptidase S10 family.

It is found in the vacuole. It catalyses the reaction Release of a C-terminal amino acid with broad specificity.. Vacuolar carboxypeptidase involved in degradation of small peptides. Digests preferentially peptides containing an aliphatic or hydrophobic residue in P1' position, as well as methionine, leucine or phenylalanine in P1 position of ester substrate. The protein is Carboxypeptidase Y homolog A (CPYA) of Paracoccidioides lutzii (strain ATCC MYA-826 / Pb01) (Paracoccidioides brasiliensis).